Here is a 352-residue protein sequence, read N- to C-terminus: Phosphate acyltransferase (352 aa).

The span at 328–339 (ESFPGDAREREG) shows a compositional bias: basic and acidic residues. The interval 328–352 (ESFPGDAREREGAPAPDAGTERVAS) is disordered.

The protein belongs to the PlsX family. Homodimer. Probably interacts with PlsY.

The protein localises to the cytoplasm. The enzyme catalyses a fatty acyl-[ACP] + phosphate = an acyl phosphate + holo-[ACP]. It functions in the pathway lipid metabolism; phospholipid metabolism. Functionally, catalyzes the reversible formation of acyl-phosphate (acyl-PO(4)) from acyl-[acyl-carrier-protein] (acyl-ACP). This enzyme utilizes acyl-ACP as fatty acyl donor, but not acyl-CoA. The protein is Phosphate acyltransferase of Citrifermentans bemidjiense (strain ATCC BAA-1014 / DSM 16622 / JCM 12645 / Bem) (Geobacter bemidjiensis).